The sequence spans 83 residues: Normal mucosa of esophagus-specific gene 1 protein (83 aa).

This sequence belongs to the complex I NDUFA4 subunit family. Expressed mainly in stomach, placenta, small intestine and colon, as well as in normal mucosa of esophagus. Down-regulated in esophageal squamous cell carcinoma.

It is found in the nucleus. This Homo sapiens (Human) protein is Normal mucosa of esophagus-specific gene 1 protein (NMES1).